The following is a 522-amino-acid chain: Glucans biosynthesis protein G (522 aa).

The N-terminal stretch at 1–33 (MLDNKFGFKQRVASLRWLSAAIMLSVSAVPAWA) is a signal peptide.

This sequence belongs to the OpgD/OpgG family.

The protein resides in the periplasm. The protein operates within glycan metabolism; osmoregulated periplasmic glucan (OPG) biosynthesis. Its function is as follows. Involved in the biosynthesis of osmoregulated periplasmic glucans (OPGs). The chain is Glucans biosynthesis protein G from Pectobacterium atrosepticum (strain SCRI 1043 / ATCC BAA-672) (Erwinia carotovora subsp. atroseptica).